Consider the following 190-residue polypeptide: Histone-arginine methyltransferase METTL23 (190 aa).

Belongs to the methyltransferase superfamily. METTL23 family. As to quaternary structure, interacts with HSPA5, HSP90B1, TUBULIN, UGGT1 and UGGT2. Interacts with TET3. Interacts with STPG4.

Its subcellular location is the nucleus. It is found in the cytoplasm. The catalysed reaction is L-arginyl-[protein] + 2 S-adenosyl-L-methionine = N(omega),N(omega)-dimethyl-L-arginyl-[protein] + 2 S-adenosyl-L-homocysteine + 2 H(+). Its function is as follows. Histone methyltransferase that dimethylates histone H3 at 'Arg-17', forming asymmetric dimethylarginine (H3R17me2a), leading to activate transcription via chromatin remodeling. Maternal factor involved in epigenetic chromatin reprogramming of the paternal genome in the zygote: mediates H3R17me2a, promoting histone H3.3 incorporation in the male pronucleus, leading to TET3 recruitment and subsequent DNA demethylation. The chain is Histone-arginine methyltransferase METTL23 from Homo sapiens (Human).